We begin with the raw amino-acid sequence, 319 residues long: Annexin A4 (319 aa).

A2 is modified (N-acetylalanine). T7 bears the Phosphothreonine mark. S12 is subject to Phosphoserine. Annexin repeat units lie at residues 14–85 (FSAT…GMIT), 86–157 (PTVL…SLSA), 169–241 (ALMR…AIVK), and 245–316 (NKSA…ILCG). 3 positions are modified to N6-acetyllysine: K213, K293, and K300.

It belongs to the annexin family. In terms of tissue distribution, expressed in pancreas (at protein level). Also detected in liver, spleen, intestine, stomach, kidney, and adrenal glands.

The protein localises to the zymogen granule membrane. Functionally, calcium/phospholipid-binding protein which promotes membrane fusion and is involved in exocytosis. This chain is Annexin A4 (ANXA4), found in Canis lupus familiaris (Dog).